The primary structure comprises 308 residues: Ribosomal RNA small subunit methyltransferase H (308 aa).

S-adenosyl-L-methionine contacts are provided by residues 32-34 (GGH), Asp-52, Phe-78, Asp-100, and Gln-107.

It belongs to the methyltransferase superfamily. RsmH family.

It is found in the cytoplasm. It carries out the reaction cytidine(1402) in 16S rRNA + S-adenosyl-L-methionine = N(4)-methylcytidine(1402) in 16S rRNA + S-adenosyl-L-homocysteine + H(+). Specifically methylates the N4 position of cytidine in position 1402 (C1402) of 16S rRNA. The sequence is that of Ribosomal RNA small subunit methyltransferase H from Legionella pneumophila (strain Paris).